Consider the following 198-residue polypeptide: Large ribosomal subunit protein uL23c (198 aa).

A chloroplast-targeting transit peptide spans 1 to 76 (MATTAPNLHS…SFGRDLMVAQ (76 aa)).

It belongs to the universal ribosomal protein uL23 family. In terms of assembly, component of the chloroplast large ribosomal subunit (LSU). Mature 70S chloroplast ribosomes of higher plants consist of a small (30S) and a large (50S) subunit. The 30S small subunit contains 1 molecule of ribosomal RNA (16S rRNA) and 24 different proteins. The 50S large subunit contains 3 rRNA molecules (23S, 5S and 4.5S rRNA) and 33 different proteins.

The protein localises to the plastid. The protein resides in the chloroplast. In terms of biological role, component of the chloroplast ribosome (chloro-ribosome), a dedicated translation machinery responsible for the synthesis of chloroplast genome-encoded proteins, including proteins of the transcription and translation machinery and components of the photosynthetic apparatus. The chain is Large ribosomal subunit protein uL23c (RPL23) from Spinacia oleracea (Spinach).